The primary structure comprises 329 residues: Terpene synthase 7 (329 aa).

The DDxx(x)D/E motif signature appears at 99 to 104 (DDLYLE). Positions 230–238 (NDIHSFNKE) match the NDxxSxxxD/E motif motif.

This sequence belongs to the terpene synthase family.

Terpene synthase that converts its substrate farnesyl diphosphate (FPP) into 6 yet unidentified sesquiterpenes. The sequence is that of Terpene synthase 7 from Dictyostelium purpureum (Slime mold).